A 441-amino-acid polypeptide reads, in one-letter code: Tol-Pal system protein TolB (441 aa).

Residues 1 to 39 (MPAMTPAFRRADLTGFLRTYGAALILLLAAMLAWQPAQA) form the signal peptide.

Belongs to the TolB family. In terms of assembly, the Tol-Pal system is composed of five core proteins: the inner membrane proteins TolA, TolQ and TolR, the periplasmic protein TolB and the outer membrane protein Pal. They form a network linking the inner and outer membranes and the peptidoglycan layer.

It is found in the periplasm. Part of the Tol-Pal system, which plays a role in outer membrane invagination during cell division and is important for maintaining outer membrane integrity. This Bordetella parapertussis (strain 12822 / ATCC BAA-587 / NCTC 13253) protein is Tol-Pal system protein TolB.